The primary structure comprises 156 residues: Small ribosomal subunit protein uS7 (156 aa).

This sequence belongs to the universal ribosomal protein uS7 family. As to quaternary structure, part of the 30S ribosomal subunit. Contacts proteins S9 and S11.

One of the primary rRNA binding proteins, it binds directly to 16S rRNA where it nucleates assembly of the head domain of the 30S subunit. Is located at the subunit interface close to the decoding center, probably blocks exit of the E-site tRNA. This is Small ribosomal subunit protein uS7 from Nitrobacter hamburgensis (strain DSM 10229 / NCIMB 13809 / X14).